The sequence spans 476 residues: Bifunctional protein HldE (476 aa).

Positions 1–319 (MAQYSAQFPH…NAIHGRTVSG (319 aa)) are ribokinase. 195–198 (NMSE) contributes to the ATP binding site. Residue D264 is part of the active site. The cytidylyltransferase stretch occupies residues 344–476 (MTNGCFDILH…VIKKIRDLKD (133 aa)).

It in the N-terminal section; belongs to the carbohydrate kinase PfkB family. The protein in the C-terminal section; belongs to the cytidylyltransferase family. As to quaternary structure, homodimer.

It carries out the reaction D-glycero-beta-D-manno-heptose 7-phosphate + ATP = D-glycero-beta-D-manno-heptose 1,7-bisphosphate + ADP + H(+). The catalysed reaction is D-glycero-beta-D-manno-heptose 1-phosphate + ATP + H(+) = ADP-D-glycero-beta-D-manno-heptose + diphosphate. Its pathway is nucleotide-sugar biosynthesis; ADP-L-glycero-beta-D-manno-heptose biosynthesis; ADP-L-glycero-beta-D-manno-heptose from D-glycero-beta-D-manno-heptose 7-phosphate: step 1/4. It participates in nucleotide-sugar biosynthesis; ADP-L-glycero-beta-D-manno-heptose biosynthesis; ADP-L-glycero-beta-D-manno-heptose from D-glycero-beta-D-manno-heptose 7-phosphate: step 3/4. Its function is as follows. Catalyzes the phosphorylation of D-glycero-D-manno-heptose 7-phosphate at the C-1 position to selectively form D-glycero-beta-D-manno-heptose-1,7-bisphosphate. In terms of biological role, catalyzes the ADP transfer from ATP to D-glycero-beta-D-manno-heptose 1-phosphate, yielding ADP-D-glycero-beta-D-manno-heptose. The protein is Bifunctional protein HldE of Actinobacillus succinogenes (strain ATCC 55618 / DSM 22257 / CCUG 43843 / 130Z).